The sequence spans 292 residues: 1,4-dihydroxy-2-naphthoate octaprenyltransferase (292 aa).

A run of 6 helical transmembrane segments spans residues 35–55, 101–121, 137–157, 166–186, 220–240, and 271–291; these read AAVW…VIGV, ALAG…VGAI, GYAG…AVLG, VDWV…SVLV, LLAV…WCVV, and TGLA…FGQL.

The protein belongs to the MenA family. Type 1 subfamily. Mg(2+) is required as a cofactor.

Its subcellular location is the cell membrane. The catalysed reaction is an all-trans-polyprenyl diphosphate + 1,4-dihydroxy-2-naphthoate + H(+) = a 2-demethylmenaquinol + CO2 + diphosphate. It participates in quinol/quinone metabolism; menaquinone biosynthesis; menaquinol from 1,4-dihydroxy-2-naphthoate: step 1/2. With respect to regulation, activity is abolished by EDTA. Inhibited by Ro 48-8071, which is non-competitive with regard to DHNA and competitive with regard to the isoprenyldiphosphate substrate. Its function is as follows. Conversion of 1,4-dihydroxy-2-naphthoate (DHNA) to demethylmenaquinone (DMK). Can use a variety of allylic isoprenyl diphosphates as substrates but has a requirement for at least three isoprene units. The sequence is that of 1,4-dihydroxy-2-naphthoate octaprenyltransferase from Mycobacterium tuberculosis (strain ATCC 25618 / H37Rv).